The chain runs to 337 residues: Ribosomal RNA small subunit methyltransferase H (337 aa).

S-adenosyl-L-methionine-binding positions include Gly45–His47, Asp64, Phe91, Asp120, and Gln127.

It belongs to the methyltransferase superfamily. RsmH family.

The protein localises to the cytoplasm. The enzyme catalyses cytidine(1402) in 16S rRNA + S-adenosyl-L-methionine = N(4)-methylcytidine(1402) in 16S rRNA + S-adenosyl-L-homocysteine + H(+). Its function is as follows. Specifically methylates the N4 position of cytidine in position 1402 (C1402) of 16S rRNA. The chain is Ribosomal RNA small subunit methyltransferase H from Corynebacterium glutamicum (strain ATCC 13032 / DSM 20300 / JCM 1318 / BCRC 11384 / CCUG 27702 / LMG 3730 / NBRC 12168 / NCIMB 10025 / NRRL B-2784 / 534).